Reading from the N-terminus, the 181-residue chain is Protein Syd (181 aa).

Belongs to the Syd family.

It is found in the cell inner membrane. In terms of biological role, interacts with the SecY protein in vivo. May bind preferentially to an uncomplexed state of SecY, thus functioning either as a chelating agent for excess SecY in the cell or as a regulatory factor that negatively controls the translocase function. This chain is Protein Syd, found in Klebsiella pneumoniae subsp. pneumoniae (strain ATCC 700721 / MGH 78578).